The following is a 42-amino-acid chain: DRDSCVDKSRCAKYGYYQECQDCCKKAGHNGGTCMFFKCKCA.

Intrachain disulfides connect cysteine 5-cysteine 23, cysteine 11-cysteine 34, cysteine 20-cysteine 39, and cysteine 24-cysteine 41.

Belongs to the ergtoxin family. Gamma-KTx 1 subfamily. Expressed by the venom gland.

The protein localises to the secreted. Functionally, blocks Kv11/ERG potassium channels. The sequence is that of Potassium channel toxin gamma-KTx 1.4 from Centruroides sculpturatus (Arizona bark scorpion).